The chain runs to 112 residues: Ribonuclease VapC8 (112 aa).

The 100-residue stretch at 10–109 (LLDTSVFIAR…TDALIAATAE (100 aa)) folds into the PINc domain. The Mg(2+) site is built by Asp-12 and Asp-101.

It belongs to the PINc/VapC protein family. Mg(2+) serves as cofactor.

Functionally, toxic component of a type II toxin-antitoxin (TA) system. An RNase. The cognate antitoxin is VapB8. The sequence is that of Ribonuclease VapC8 (vapC8) from Mycobacterium tuberculosis (strain CDC 1551 / Oshkosh).